A 290-amino-acid chain; its full sequence is Bifunctional protein FolD (290 aa).

NADP(+)-binding positions include 167 to 169 (GRS), serine 192, and isoleucine 233.

This sequence belongs to the tetrahydrofolate dehydrogenase/cyclohydrolase family. In terms of assembly, homodimer.

It catalyses the reaction (6R)-5,10-methylene-5,6,7,8-tetrahydrofolate + NADP(+) = (6R)-5,10-methenyltetrahydrofolate + NADPH. It carries out the reaction (6R)-5,10-methenyltetrahydrofolate + H2O = (6R)-10-formyltetrahydrofolate + H(+). It participates in one-carbon metabolism; tetrahydrofolate interconversion. Functionally, catalyzes the oxidation of 5,10-methylenetetrahydrofolate to 5,10-methenyltetrahydrofolate and then the hydrolysis of 5,10-methenyltetrahydrofolate to 10-formyltetrahydrofolate. The sequence is that of Bifunctional protein FolD from Gloeobacter violaceus (strain ATCC 29082 / PCC 7421).